The primary structure comprises 125 residues: Holo-[acyl-carrier-protein] synthase (125 aa).

Positions 6 and 55 each coordinate Mg(2+).

This sequence belongs to the P-Pant transferase superfamily. AcpS family. Mg(2+) serves as cofactor.

It is found in the cytoplasm. It carries out the reaction apo-[ACP] + CoA = holo-[ACP] + adenosine 3',5'-bisphosphate + H(+). In terms of biological role, transfers the 4'-phosphopantetheine moiety from coenzyme A to a Ser of acyl-carrier-protein. This chain is Holo-[acyl-carrier-protein] synthase, found in Chlorobium phaeovibrioides (strain DSM 265 / 1930) (Prosthecochloris vibrioformis (strain DSM 265)).